The primary structure comprises 387 residues: Beta-carotene 4-ketolase (387 aa).

The tract at residues 1-78 is disordered; it reads MPHSIDMEDS…GNPTVDDASQ (78 aa). 2 stretches are compositionally biased toward polar residues: residues 43-53 and 65-78; these read NWQTQYHSSEG and DATTGNPTVDDASQ.

The enzyme catalyses echinenone + 2 AH2 + 2 O2 = canthaxanthin + 2 A + 3 H2O. It catalyses the reaction all-trans-beta-carotene + 2 AH2 + 2 O2 = echinenone + 2 A + 3 H2O. The protein operates within carotenoid biosynthesis. In terms of biological role, involved in the biosynthesis of ketocarotenoids which are powerful anti-oxidative molecules. Catalyzes the conversion of beta-carotene to canthaxanthin via echinenone. This chain is Beta-carotene 4-ketolase, found in Protosiphon botryoides (Green alga).